The sequence spans 147 residues: Prefoldin subunit alpha (147 aa).

It belongs to the prefoldin alpha subunit family. Heterohexamer of two alpha and four beta subunits.

It localises to the cytoplasm. Functionally, molecular chaperone capable of stabilizing a range of proteins. Seems to fulfill an ATP-independent, HSP70-like function in archaeal de novo protein folding. This Methanocorpusculum labreanum (strain ATCC 43576 / DSM 4855 / Z) protein is Prefoldin subunit alpha.